The following is a 130-amino-acid chain: Fluoride-specific ion channel FluC (130 aa).

The next 4 membrane-spanning stretches (helical) occupy residues 3–23 (FIFL…YFVG), 39–59 (GTFS…HLAV), 67–87 (FGIF…SYGL), and 102–122 (VSYA…GWFL). Gly77 and Thr80 together coordinate Na(+).

The protein belongs to the fluoride channel Fluc/FEX (TC 1.A.43) family.

Its subcellular location is the cell inner membrane. The catalysed reaction is fluoride(in) = fluoride(out). With respect to regulation, na(+) is not transported, but it plays an essential structural role and its presence is essential for fluoride channel function. Functionally, fluoride-specific ion channel. Important for reducing fluoride concentration in the cell, thus reducing its toxicity. The sequence is that of Fluoride-specific ion channel FluC from Helicobacter pylori (strain Shi470).